Reading from the N-terminus, the 570-residue chain is Sulfite reductase [NADPH] hemoprotein beta-component (570 aa).

Residues C434, C440, C479, and C483 each coordinate [4Fe-4S] cluster. Siroheme is bound at residue C483.

The protein belongs to the nitrite and sulfite reductase 4Fe-4S domain family. In terms of assembly, alpha(8)-beta(8). The alpha component is a flavoprotein, the beta component is a hemoprotein. Requires siroheme as cofactor. It depends on [4Fe-4S] cluster as a cofactor.

It catalyses the reaction hydrogen sulfide + 3 NADP(+) + 3 H2O = sulfite + 3 NADPH + 4 H(+). It functions in the pathway sulfur metabolism; hydrogen sulfide biosynthesis; hydrogen sulfide from sulfite (NADPH route): step 1/1. Functionally, component of the sulfite reductase complex that catalyzes the 6-electron reduction of sulfite to sulfide. This is one of several activities required for the biosynthesis of L-cysteine from sulfate. This is Sulfite reductase [NADPH] hemoprotein beta-component from Escherichia coli O17:K52:H18 (strain UMN026 / ExPEC).